The following is a 233-amino-acid chain: Thrombin-like enzyme elegaxobin-2 (233 aa).

The 224-residue stretch at 1 to 224 (VIGGDECNIN…HLDWIKGIIA (224 aa)) folds into the Peptidase S1 domain. 6 disulfides stabilise this stretch: Cys7-Cys138, Cys25-Cys41, Cys73-Cys231, Cys117-Cys185, Cys149-Cys164, and Cys175-Cys200. Residue His40 is the Charge relay system of the active site. The N-linked (GlcNAc...) asparagine glycan is linked to Asn78. Asp85 functions as the Charge relay system in the catalytic mechanism. Ser179 (charge relay system) is an active-site residue.

This sequence belongs to the peptidase S1 family. Snake venom subfamily. Monomer. In terms of tissue distribution, expressed by the venom gland.

It is found in the secreted. Thrombin-like snake venom serine protease that clots rabbit fibrinogen. Only the beta chain of fibrinogen (FGB) is cleaved, releasing fibrinopeptide B. Human and bovine fibrinogen are unaffected. Also cleaves Met-Lys and Arg-Ser bonds in heat-denatured bovine plasma kininogen to release Lys-bradykinin. This Protobothrops elegans (Elegant pitviper) protein is Thrombin-like enzyme elegaxobin-2.